The primary structure comprises 287 residues: Diphthine methyl ester synthase (287 aa).

S-adenosyl-L-methionine contacts are provided by residues Leu9, Asp84, Gly87, 112-113 (SI), Leu163, Val221, and His248.

This sequence belongs to the diphthine synthase family.

The protein resides in the cytoplasm. It catalyses the reaction 2-[(3S)-amino-3-carboxypropyl]-L-histidyl-[translation elongation factor 2] + 4 S-adenosyl-L-methionine = diphthine methyl ester-[translation elongation factor 2] + 4 S-adenosyl-L-homocysteine + 3 H(+). The protein operates within protein modification; peptidyl-diphthamide biosynthesis. S-adenosyl-L-methionine-dependent methyltransferase that catalyzes four methylations of the modified target histidine residue in translation elongation factor 2 (EF-2), to form an intermediate called diphthine methyl ester. The four successive methylation reactions represent the second step of diphthamide biosynthesis. In Neurospora crassa (strain ATCC 24698 / 74-OR23-1A / CBS 708.71 / DSM 1257 / FGSC 987), this protein is Diphthine methyl ester synthase (dph-5).